The chain runs to 45 residues: Defensin Tk-AMP-D3 (45 aa).

4 cysteine pairs are disulfide-bonded: cysteine 3–cysteine 45, cysteine 14–cysteine 34, cysteine 20–cysteine 39, and cysteine 24–cysteine 41.

Its function is as follows. Plant defense peptide. The polypeptide is Defensin Tk-AMP-D3 (Triticum kiharae (Wheat)).